Reading from the N-terminus, the 137-residue chain is MLVPKRVKHRREFRGKMRGEAKGGKQVDFGQYGLQATTSSWITNRQIEAARIAMTRYMKRGGKVWIKIFPHKSYTAKAIGVRMGSGKGAPEGWVAPVKRGKVMFEVAGVSEEIAREAFRLAGHKLPVKVKFVKREAE.

It belongs to the universal ribosomal protein uL16 family. Part of the 50S ribosomal subunit.

Functionally, binds 23S rRNA and is also seen to make contacts with the A and possibly P site tRNAs. The protein is Large ribosomal subunit protein uL16 of Streptococcus suis (strain 98HAH33).